Here is a 424-residue protein sequence, read N- to C-terminus: Dihydroorotase (424 aa).

Residues histidine 58 and histidine 60 each coordinate Zn(2+). Substrate-binding positions include 60–62, asparagine 92, and asparagine 276; that span reads HLR. Residue aspartate 303 coordinates Zn(2+). The active site involves aspartate 303. Substrate contacts are provided by residues histidine 307 and 321–322; that span reads FG.

This sequence belongs to the metallo-dependent hydrolases superfamily. DHOase family. Class I DHOase subfamily. Zn(2+) is required as a cofactor.

It catalyses the reaction (S)-dihydroorotate + H2O = N-carbamoyl-L-aspartate + H(+). Its pathway is pyrimidine metabolism; UMP biosynthesis via de novo pathway; (S)-dihydroorotate from bicarbonate: step 3/3. Its function is as follows. Catalyzes the reversible cyclization of carbamoyl aspartate to dihydroorotate. In Staphylococcus aureus (strain COL), this protein is Dihydroorotase.